The sequence spans 395 residues: Flap endonuclease 1 (395 aa).

Residues 1–104 (MGIKQLYQVI…GELAKRFARK (104 aa)) are N-domain. Asp-34 is a Mg(2+) binding site. The DNA site is built by Arg-47 and Arg-70. Asp-86, Glu-158, Glu-160, Asp-179, and Asp-181 together coordinate Mg(2+). The I-domain stretch occupies residues 122 to 253 (DVEKFSRRTV…NTALKLIRDH (132 aa)). Glu-158 is a binding site for DNA. Gly-231 and Asp-233 together coordinate DNA. Mg(2+) is bound at residue Asp-233. The interaction with PCNA stretch occupies residues 341–349 (QQSRLEGFF). A disordered region spans residues 344–395 (RLEGFFKPVARTDEEKASLKRKHDEKIQEQKKKKKEEAKAKKEAKSRPRGAG). The segment covering 353 to 389 (ARTDEEKASLKRKHDEKIQEQKKKKKEEAKAKKEAKS) has biased composition (basic and acidic residues).

It belongs to the XPG/RAD2 endonuclease family. FEN1 subfamily. Interacts with PCNA. Three molecules of fen1 bind to one PCNA trimer with each molecule binding to one PCNA monomer. PCNA stimulates the nuclease activity without altering cleavage specificity. The cofactor is Mg(2+). In terms of processing, phosphorylated. Phosphorylation upon DNA damage induces relocalization to the nuclear plasma.

The protein localises to the nucleus. The protein resides in the nucleolus. It localises to the nucleoplasm. It is found in the mitochondrion. In terms of biological role, structure-specific nuclease with 5'-flap endonuclease and 5'-3' exonuclease activities involved in DNA replication and repair. During DNA replication, cleaves the 5'-overhanging flap structure that is generated by displacement synthesis when DNA polymerase encounters the 5'-end of a downstream Okazaki fragment. It enters the flap from the 5'-end and then tracks to cleave the flap base, leaving a nick for ligation. Also involved in the long patch base excision repair (LP-BER) pathway, by cleaving within the apurinic/apyrimidinic (AP) site-terminated flap. Acts as a genome stabilization factor that prevents flaps from equilibrating into structures that lead to duplications and deletions. Also possesses 5'-3' exonuclease activity on nicked or gapped double-stranded DNA, and exhibits RNase H activity. Also involved in replication and repair of rDNA and in repairing mitochondrial DNA. The polypeptide is Flap endonuclease 1 (fen1) (Aspergillus niger (strain ATCC MYA-4892 / CBS 513.88 / FGSC A1513)).